The following is a 185-amino-acid chain: Hypoxanthine/guanine phosphoribosyltransferase (185 aa).

The protein belongs to the purine/pyrimidine phosphoribosyltransferase family. Archaeal HPRT subfamily. As to quaternary structure, homodimer.

It localises to the cytoplasm. The catalysed reaction is IMP + diphosphate = hypoxanthine + 5-phospho-alpha-D-ribose 1-diphosphate. It carries out the reaction GMP + diphosphate = guanine + 5-phospho-alpha-D-ribose 1-diphosphate. It functions in the pathway purine metabolism; IMP biosynthesis via salvage pathway; IMP from hypoxanthine: step 1/1. In terms of biological role, catalyzes a salvage reaction resulting in the formation of IMP that is energically less costly than de novo synthesis. In Methanococcus maripaludis (strain C5 / ATCC BAA-1333), this protein is Hypoxanthine/guanine phosphoribosyltransferase.